We begin with the raw amino-acid sequence, 157 residues long: S-ribosylhomocysteine lyase (157 aa).

Fe cation is bound by residues His54, His58, and Cys126.

It belongs to the LuxS family. In terms of assembly, homodimer. Fe cation serves as cofactor.

The enzyme catalyses S-(5-deoxy-D-ribos-5-yl)-L-homocysteine = (S)-4,5-dihydroxypentane-2,3-dione + L-homocysteine. Involved in the synthesis of autoinducer 2 (AI-2) which is secreted by bacteria and is used to communicate both the cell density and the metabolic potential of the environment. The regulation of gene expression in response to changes in cell density is called quorum sensing. Catalyzes the transformation of S-ribosylhomocysteine (RHC) to homocysteine (HC) and 4,5-dihydroxy-2,3-pentadione (DPD). The polypeptide is S-ribosylhomocysteine lyase (Bacillus cereus (strain 03BB102)).